The following is a 109-amino-acid chain: Histidine-rich carboxyl terminus protein 1 (109 aa).

A helical transmembrane segment spans residues 13 to 33 (WITGTALAFLMLLWLMALCLF). Residues 77–109 (TSVGVHHHHHHSPHRLHHHKHHHRHHHAHGARR) are disordered. A compositionally biased stretch (basic residues) spans 81–109 (VHHHHHHSPHRLHHHKHHHRHHHAHGARR).

The protein resides in the membrane. The chain is Histidine-rich carboxyl terminus protein 1 (Hrct1) from Mus musculus (Mouse).